A 1367-amino-acid polypeptide reads, in one-letter code: DNA polymerase III PolC-type (1367 aa).

In terms of domain architecture, Exonuclease spans phenylalanine 358–phenylalanine 513.

It belongs to the DNA polymerase type-C family. PolC subfamily.

The protein localises to the cytoplasm. The catalysed reaction is DNA(n) + a 2'-deoxyribonucleoside 5'-triphosphate = DNA(n+1) + diphosphate. Required for replicative DNA synthesis. This DNA polymerase also exhibits 3' to 5' exonuclease activity. This is DNA polymerase III PolC-type from Thermotoga maritima (strain ATCC 43589 / DSM 3109 / JCM 10099 / NBRC 100826 / MSB8).